Here is a 739-residue protein sequence, read N- to C-terminus: tRNA 5-methylaminomethyl-2-thiouridine biosynthesis bifunctional protein MnmC (739 aa).

The tract at residues 1-282 (MDKVTPAKLS…KREMLTATKL (282 aa)) is tRNA (mnm(5)s(2)U34)-methyltransferase. The tract at residues 330–739 (IGAGVCGLMA…HRSSLKKPLS (410 aa)) is FAD-dependent cmnm(5)s(2)U34 oxidoreductase.

It in the N-terminal section; belongs to the methyltransferase superfamily. tRNA (mnm(5)s(2)U34)-methyltransferase family. The protein in the C-terminal section; belongs to the DAO family. Requires FAD as cofactor.

The protein localises to the cytoplasm. It carries out the reaction 5-aminomethyl-2-thiouridine(34) in tRNA + S-adenosyl-L-methionine = 5-methylaminomethyl-2-thiouridine(34) in tRNA + S-adenosyl-L-homocysteine + H(+). Its function is as follows. Catalyzes the last two steps in the biosynthesis of 5-methylaminomethyl-2-thiouridine (mnm(5)s(2)U) at the wobble position (U34) in tRNA. Catalyzes the FAD-dependent demodification of cmnm(5)s(2)U34 to nm(5)s(2)U34, followed by the transfer of a methyl group from S-adenosyl-L-methionine to nm(5)s(2)U34, to form mnm(5)s(2)U34. The polypeptide is tRNA 5-methylaminomethyl-2-thiouridine biosynthesis bifunctional protein MnmC (Psychrobacter sp. (strain PRwf-1)).